The sequence spans 506 residues: Histidine ammonia-lyase (506 aa).

The segment at residues 143 to 145 (ASG) is a cross-link (5-imidazolinone (Ala-Gly)). 2,3-didehydroalanine (Ser) is present on Ser144.

The protein belongs to the PAL/histidase family. Post-translationally, contains an active site 4-methylidene-imidazol-5-one (MIO), which is formed autocatalytically by cyclization and dehydration of residues Ala-Ser-Gly.

The protein resides in the cytoplasm. It catalyses the reaction L-histidine = trans-urocanate + NH4(+). The protein operates within amino-acid degradation; L-histidine degradation into L-glutamate; N-formimidoyl-L-glutamate from L-histidine: step 1/3. This chain is Histidine ammonia-lyase, found in Salmonella typhimurium (strain LT2 / SGSC1412 / ATCC 700720).